A 225-amino-acid polypeptide reads, in one-letter code: NAD(P)H-quinone oxidoreductase subunit K, chloroplastic (225 aa).

[4Fe-4S] cluster contacts are provided by Cys43, Cys44, Cys108, and Cys139.

The protein belongs to the complex I 20 kDa subunit family. As to quaternary structure, NDH is composed of at least 16 different subunits, 5 of which are encoded in the nucleus. The cofactor is [4Fe-4S] cluster.

It localises to the plastid. It is found in the chloroplast thylakoid membrane. The catalysed reaction is a plastoquinone + NADH + (n+1) H(+)(in) = a plastoquinol + NAD(+) + n H(+)(out). It carries out the reaction a plastoquinone + NADPH + (n+1) H(+)(in) = a plastoquinol + NADP(+) + n H(+)(out). Its function is as follows. NDH shuttles electrons from NAD(P)H:plastoquinone, via FMN and iron-sulfur (Fe-S) centers, to quinones in the photosynthetic chain and possibly in a chloroplast respiratory chain. The immediate electron acceptor for the enzyme in this species is believed to be plastoquinone. Couples the redox reaction to proton translocation, and thus conserves the redox energy in a proton gradient. In Populus trichocarpa (Western balsam poplar), this protein is NAD(P)H-quinone oxidoreductase subunit K, chloroplastic.